We begin with the raw amino-acid sequence, 859 residues long: Low-density lipoprotein receptor-related protein 12 (859 aa).

A signal peptide spans 1–32 (MARRWSTKESPRWRSALLLLFLAGVYGNGALA). Over 33–492 (EHSENVHISG…ENCPVIVPTR (460 aa)) the chain is Extracellular. Cystine bridges form between C47/C76 and C103/C122. In terms of domain architecture, CUB 1 spans 47–159 (CGETPEQIRA…KGFRLAYFSG (113 aa)). Residue N75 is glycosylated (N-linked (GlcNAc...) asparagine). N146 is a glycosylation site (N-linked (GlcNAc...) asparagine). 2 LDL-receptor class A domains span residues 165–201 (NCACDQFRCGNGKCIPEAWKCNNMDECGDSSDEEICA) and 214–255 (PCAY…IDCD). Cystine bridges form between C166/C178, C173/C191, C185/C200, C215/C232, C222/C245, C239/C254, and C259/C285. The region spanning 259–372 (CGQWLKYFYG…RGFNATYQVD (114 aa)) is the CUB 2 domain. 2 N-linked (GlcNAc...) asparagine glycosylation sites follow: N284 and N366. 3 consecutive LDL-receptor class A domains span residues 374–411 (FCLPWEIPCGGNWGCYTEQQRCDGYWHCPNGRDEINCT), 412–449 (MCQKEEFPCSRNGVCYPRSDRCNYQNHCPNGSDEKNCF), and 450–486 (FCQPGNFHCKNNRCVFESWVCDSQDDCGDGSDEENCP). 9 cysteine pairs are disulfide-bonded: C375-C388, C382-C401, C395-C410, C413-C426, C420-C439, C433-C448, C451-C463, C458-C476, and C470-C485. An N-linked (GlcNAc...) asparagine glycan is attached at N409. An N-linked (GlcNAc...) asparagine glycan is attached at N441. The chain crosses the membrane as a helical span at residues 493 to 513 (VITAAVIGSLICGLLLVIALG). The Cytoplasmic portion of the chain corresponds to 514–859 (CTCKLYSLRM…TSDDEALLLC (346 aa)). 4 disordered regions span residues 623-678 (ADGD…LPQK), 693-723 (ASSSTQSTRGGHADNGRDVTSVEPPSVSPAR), 748-770 (SSVSQNQSPLRQLDNGVSGREDD), and 802-823 (QGQGLRQPYNATNPGVRPSNRD). 2 stretches are compositionally biased toward polar residues: residues 748-757 (SSVSQNQSPL) and 802-814 (QGQGLRQPYNATN).

This sequence belongs to the LDLR family. May interact with RACK1, ZFYVE9 and NMRK2.

The protein resides in the membrane. Its subcellular location is the coated pit. Its function is as follows. Probable receptor, which may be involved in the internalization of lipophilic molecules and/or signal transduction. May act as a tumor suppressor. This chain is Low-density lipoprotein receptor-related protein 12 (LRP12), found in Pongo abelii (Sumatran orangutan).